The chain runs to 354 residues: MASTNISDREKALNAALAQIERSFGKGAIMRLGDATQMRVETISTGALTLDLALGGGLPKGRIVEIYGPESSGKTTLALHAVAATQQAGGVAAFVDAEHALDPVYSKALGVDIDNLLVAQPDNGESALEIVDQLVRSTAVDIIVVDSVAALVPRAEIEGEMGDTSVGSQARLMSKAMRKIAGNIGRSGCLVIFLNQLRQKIGVTYGSPEVTTGGNALKFYASVRLDIRRIQTLKKGTEGEYGIRAKVKVAKNKVAPPFRIAEFDIIFGQGISRMGCTIDLAEKCEVITRKGAWYSYNGENIAQGRDNAMKYLEENPEIAATIDQQVREKLSLVNAVFPVETEDGAEEQGEDGDF.

Gly-68–Thr-75 is a binding site for ATP.

The protein belongs to the RecA family.

It localises to the cytoplasm. Its function is as follows. Can catalyze the hydrolysis of ATP in the presence of single-stranded DNA, the ATP-dependent uptake of single-stranded DNA by duplex DNA, and the ATP-dependent hybridization of homologous single-stranded DNAs. It interacts with LexA causing its activation and leading to its autocatalytic cleavage. The chain is Protein RecA from Synechocystis sp. (strain ATCC 27184 / PCC 6803 / Kazusa).